Reading from the N-terminus, the 305-residue chain is Acetaldehyde dehydrogenase 5 (305 aa).

Position 11–14 (11–14) interacts with NAD(+); the sequence is SGNI. The active-site Acyl-thioester intermediate is C130. NAD(+) contacts are provided by residues 161 to 169 and N272; that span reads SIGPGTRAN.

It belongs to the acetaldehyde dehydrogenase family.

The catalysed reaction is acetaldehyde + NAD(+) + CoA = acetyl-CoA + NADH + H(+). This chain is Acetaldehyde dehydrogenase 5, found in Dechloromonas aromatica (strain RCB).